We begin with the raw amino-acid sequence, 226 residues long: ATP synthase subunit a (226 aa).

5 consecutive transmembrane segments (helical) span residues L18–L38, F74–F94, L100–I120, L162–M182, and I187–A207.

The protein belongs to the ATPase A chain family. In terms of assembly, F-type ATPases have 2 components, CF(1) - the catalytic core - and CF(0) - the membrane proton channel. CF(1) has five subunits: alpha(3), beta(3), gamma(1), delta(1), epsilon(1). CF(0) has three main subunits: a, b and c.

The protein resides in the mitochondrion inner membrane. In terms of biological role, mitochondrial membrane ATP synthase (F(1)F(0) ATP synthase or Complex V) produces ATP from ADP in the presence of a proton gradient across the membrane which is generated by electron transport complexes of the respiratory chain. F-type ATPases consist of two structural domains, F(1) - containing the extramembraneous catalytic core and F(0) - containing the membrane proton channel, linked together by a central stalk and a peripheral stalk. During catalysis, ATP synthesis in the catalytic domain of F(1) is coupled via a rotary mechanism of the central stalk subunits to proton translocation. Key component of the proton channel; it may play a direct role in the translocation of protons across the membrane. The polypeptide is ATP synthase subunit a (Aedes aegypti (Yellowfever mosquito)).